Reading from the N-terminus, the 397-residue chain is S-adenosylmethionine synthase (397 aa).

H15 is an ATP binding site. Residue D17 participates in Mg(2+) binding. E43 is a binding site for K(+). E56 and Q99 together coordinate L-methionine. The tract at residues 99–109 is flexible loop; that stretch reads QSPDIAQGVTA. Residues 173–175, 242–243, D251, 257–258, A274, and K278 each bind ATP; these read DGK, KF, and RK. Residue D251 participates in L-methionine binding. An L-methionine-binding site is contributed by K282.

Belongs to the AdoMet synthase family. In terms of assembly, homotetramer; dimer of dimers. The cofactor is Mg(2+). K(+) serves as cofactor.

It localises to the cytoplasm. It catalyses the reaction L-methionine + ATP + H2O = S-adenosyl-L-methionine + phosphate + diphosphate. Its pathway is amino-acid biosynthesis; S-adenosyl-L-methionine biosynthesis; S-adenosyl-L-methionine from L-methionine: step 1/1. Functionally, catalyzes the formation of S-adenosylmethionine (AdoMet) from methionine and ATP. The overall synthetic reaction is composed of two sequential steps, AdoMet formation and the subsequent tripolyphosphate hydrolysis which occurs prior to release of AdoMet from the enzyme. The chain is S-adenosylmethionine synthase from Cutibacterium acnes (strain DSM 16379 / KPA171202) (Propionibacterium acnes).